We begin with the raw amino-acid sequence, 282 residues long: Proteasome subunit beta (282 aa).

A propeptide spans 1-54 (removed in mature form; by autocatalysis); that stretch reads MGSHRDLPAGMVNHIFTNSGISSFTEFVGSYAPDLLPGRNETLAAPVGDRIPHA. The active-site Nucleophile is the T55.

This sequence belongs to the peptidase T1B family. The 20S proteasome core is composed of 14 alpha and 14 beta subunits that assemble into four stacked heptameric rings, resulting in a barrel-shaped structure. The two inner rings, each composed of seven catalytic beta subunits, are sandwiched by two outer rings, each composed of seven alpha subunits. The catalytic chamber with the active sites is on the inside of the barrel. Has a gated structure, the ends of the cylinder being occluded by the N-termini of the alpha-subunits. Is capped by the proteasome-associated ATPase, ARC.

It localises to the cytoplasm. It carries out the reaction Cleavage of peptide bonds with very broad specificity.. The protein operates within protein degradation; proteasomal Pup-dependent pathway. Its activity is regulated as follows. The formation of the proteasomal ATPase ARC-20S proteasome complex, likely via the docking of the C-termini of ARC into the intersubunit pockets in the alpha-rings, may trigger opening of the gate for substrate entry. Interconversion between the open-gate and close-gate conformations leads to a dynamic regulation of the 20S proteasome proteolysis activity. Functionally, component of the proteasome core, a large protease complex with broad specificity involved in protein degradation. This Streptosporangium roseum (strain ATCC 12428 / DSM 43021 / JCM 3005 / KCTC 9067 / NCIMB 10171 / NRRL 2505 / NI 9100) protein is Proteasome subunit beta.